The sequence spans 472 residues: H(+)/Cl(-) exchange transporter ClcA (472 aa).

Residues 1 to 32 (MKAETPSFEAHQFVRVRRGDAVRRLIQRDKTP) are Cytoplasmic-facing. The helical transmembrane segment at 33–69 (LAVLFMAAVVGTLAGLVGVAFEKSVNWVQNQRIGALA) threads the bilayer. Residues 70 to 76 (QVADHWY) lie on the Periplasmic side of the membrane. A helical membrane pass occupies residues 77 to 100 (LVWPLAFILSALLAMVGYFLVRRF). Positions 106 to 110 (GSGIP) match the Selectivity filter part_1 motif. Ser107 is a chloride binding site. Positions 109–116 (IPEIEGAL) form an intramembrane region, helical. Residues 117-123 (EELRPVR) are Cytoplasmic-facing. 2 helical membrane passes run 124-141 (WWRVLPVKFVGGMGTLGA) and 148-166 (EGPMVQLGGNIGRMVLDVF). The Selectivity filter part_2 signature appears at 146–150 (GREGP). At 167–176 (RMRSPEARHT) the chain is on the cytoplasmic side. 2 intramembrane regions (helical) span residues 177-189 (LLATGAASGLSAA) and 193-201 (PLAGILFII). Residues 202–214 (EEMRPQFRYNLIS) are Cytoplasmic-facing. Residues 215–232 (IKAVFTGVIMSSIVFRIF) traverse the membrane as a helical segment. At 233–252 (NGEAAIIEVGKLSNAPVNTL) the chain is on the periplasmic side. The helical transmembrane segment at 253–281 (WLYLVLGMLFGCFGPLFNFLVLRTQDLFQ) threads the bilayer. Over 282 to 287 (RIHGGN) the chain is Cytoplasmic. The chain crosses the membrane as a helical span at residues 288–309 (IKKWVLIGGLIGGLCGLLGLMQ). Over 310-329 (PSAVGGGFNLIPIAAAGNFS) the chain is Periplasmic. 2 consecutive transmembrane segments (helical) span residues 330–349 (VGLLLFIFIARVVTTLICFS) and 355–376 (GIFAPMLALGTLLGTAFGMAAI). The Selectivity filter part_3 signature appears at 355-359 (GIFAP). 2 residues coordinate chloride: Ile356 and Phe357. Over 377 to 386 (PLFPAYHLDA) the chain is Periplasmic. Residues 387 to 401 (GTFAIAGMGALLAAS) constitute an intramembrane region (helical). The note=Loop between two helices intramembrane region spans 402–404 (VRA). The helical intramembrane region spans 405 to 416 (PLTGIVLVLEMT). Positions 417–421 (DNYQL) form an intramembrane region, note=Loop between two helices. Residues 422–438 (ILPMIITCLGATLLAQF) traverse the membrane as a helical segment. At 439 to 472 (LGGKPLYSTILQRTLAKQEAEQAAKAQQAPRENT) the chain is on the cytoplasmic side. Chloride is bound at residue Tyr445.

It belongs to the chloride channel (TC 2.A.49) family. ClcA subfamily. As to quaternary structure, homodimer.

It is found in the cell inner membrane. It catalyses the reaction 2 chloride(in) + H(+)(out) = 2 chloride(out) + H(+)(in). In terms of biological role, proton-coupled chloride transporter. Functions as antiport system and exchanges two chloride ions for 1 proton. Probably acts as an electrical shunt for an outwardly-directed proton pump that is linked to amino acid decarboxylation, as part of the extreme acid resistance (XAR) response. The protein is H(+)/Cl(-) exchange transporter ClcA of Klebsiella pneumoniae subsp. pneumoniae (strain ATCC 700721 / MGH 78578).